Reading from the N-terminus, the 383-residue chain is Succinyl-diaminopimelate desuccinylase (383 aa).

H74 contributes to the Zn(2+) binding site. The active site involves D76. D107 lines the Zn(2+) pocket. E141 (proton acceptor) is an active-site residue. Zn(2+) is bound by residues E142, E170, and H356.

Belongs to the peptidase M20A family. DapE subfamily. In terms of assembly, homodimer. Zn(2+) serves as cofactor. It depends on Co(2+) as a cofactor.

The catalysed reaction is N-succinyl-(2S,6S)-2,6-diaminopimelate + H2O = (2S,6S)-2,6-diaminopimelate + succinate. It functions in the pathway amino-acid biosynthesis; L-lysine biosynthesis via DAP pathway; LL-2,6-diaminopimelate from (S)-tetrahydrodipicolinate (succinylase route): step 3/3. Its function is as follows. Catalyzes the hydrolysis of N-succinyl-L,L-diaminopimelic acid (SDAP), forming succinate and LL-2,6-diaminopimelate (DAP), an intermediate involved in the bacterial biosynthesis of lysine and meso-diaminopimelic acid, an essential component of bacterial cell walls. This is Succinyl-diaminopimelate desuccinylase from Cupriavidus taiwanensis (strain DSM 17343 / BCRC 17206 / CCUG 44338 / CIP 107171 / LMG 19424 / R1) (Ralstonia taiwanensis (strain LMG 19424)).